The following is a 292-amino-acid chain: tRNA pseudouridine synthase B (292 aa).

D38 acts as the Nucleophile in catalysis.

Belongs to the pseudouridine synthase TruB family. Type 1 subfamily.

The catalysed reaction is uridine(55) in tRNA = pseudouridine(55) in tRNA. Responsible for synthesis of pseudouridine from uracil-55 in the psi GC loop of transfer RNAs. This chain is tRNA pseudouridine synthase B, found in Streptococcus pneumoniae serotype 4 (strain ATCC BAA-334 / TIGR4).